We begin with the raw amino-acid sequence, 145 residues long: Cell wall synthesis protein CwsA (145 aa).

A helical transmembrane segment spans residues 104-124 (WIFAGIAAAILAGGAVAFSIV).

Belongs to the CwsA family.

Its subcellular location is the cell membrane. Its function is as follows. Required for regulated cell division, cell wall synthesis and the maintenance of cell shape. This Mycobacterium bovis (strain ATCC BAA-935 / AF2122/97) protein is Cell wall synthesis protein CwsA.